The chain runs to 448 residues: Beclin-1 (448 aa).

An N-acetylmethionine modification is found at Met1. A phosphoserine mark is found at Ser14 and Ser29. Phosphoserine; by AMPK is present on residues Ser88, Ser91, and Ser94. Residues 106–125 (TMENLSRRLKVTGDLFDIMS) carry the BH3 motif. The segment at 110 to 157 (LSRRLKVTGDLFDIMSGQTDVDHPLCEECTDTLLDQLDTQLNVTENEC) is interaction with BCL2 and BCL2L1. Thr117 carries the post-translational modification Phosphothreonine; by DAPK1. The stretch at 140–267 (DTLLDQLDTQ…QLDKLKKTNV (128 aa)) forms a coiled coil. An evolutionary conserved domain (ECD) region spans residues 243–448 (DELKSVENQM…AWVSSQFYNK (206 aa)). Glycyl lysine isopeptide (Lys-Gly) (interchain with G-Cter in ubiquitin) cross-links involve residues Lys400 and Lys435. Residues 423 to 448 (WTKALKFMLTNLKWGLAWVSSQFYNK) form a required for membrane-association region.

The protein belongs to the beclin family. In terms of assembly, a homodimeric form is proposed to exist; this metastable form readily transits to ATG14- or UVRAG-containing complexes with BECN1:UVRAG being more stable than BECN1:ATG14. Component of the PI3K (PI3KC3/PI3K-III/class III phosphatidylinositol 3-kinase) complex the core of which is composed of the catalytic subunit PIK3C3, the regulatory subunit PIK3R4 and BECN1 associating with additional regulatory/auxiliary subunits to form alternative complex forms. Alternative complex forms containing a fourth regulatory subunit in a mutually exclusive manner are PI3K complex I (PI3KC3-C1) containing ATG14, and PI3K complex II (PI3KC3-C2) containing UVRAG. PI3KC3-C1 displays a V-shaped architecture with PIK3R4 serving as a bridge between PIK3C3 and the ATG14:BECN1 subcomplex. Both, PI3KC3-C1 and PI3KC3-C2, can associate with further regulatory subunits, such as RUBCN, SH3GLB1/Bif-1 and AMBRA1. PI3KC3-C1 probably associates with PIK3CB. Forms a complex with PPP2CA and AMBRA1; AMBRA1 and BECN1 components of the complex regulate MYC stability via different pathways. Component of the complex, at least composed of LRPPRC, BECN1 and BCL2; the interactions prevent BECN1 from forming an autophagy-inducing complex with PIK3C3. Interacts with AMBRA1, GOPC, GRID2. Interacts with BCL2 and BCL2L1 isoform Bcl-X(L); the interaction inhibits BECN1 function in promoting autophagy by interfering with the formation of the PI3K complex. Interacts with cytosolic HMGB1; inhibits the interaction of BECN1 and BCL2 leading to promotion of autophagy. Interacts with USP10, USP13, VMP1, DAPK1, RAB39A. Interacts with the poly-Gln domain of ATXN3; the interaction causes deubiquitination at Lys-400 and stabilizes BECN1. Interacts with SLAMF1. Interacts with TRIM5; the interaction causes activation of BECN1 by causing its dissociation from its inhibitors BCL2 and TAB2. Interacts with active ULK1 (phosphorylated on 'Ser-317') and MEFV simultaneously. Interacts with WDR81 and WDR91; negatively regulates the PI3 kinase/PI3K activity associated with endosomal membranes. Interacts with LAPTM4B; competes with EGFR for LAPTM4B binding; regulates EGFR activity. Interacts with TRIM50. Interacts with TRIM16. Interacts with ATG14; this interaction is increased in the absence of TMEM39A. Interacts with WASHC1; preventing interaction with AMBRA1 and the DCX(AMBRA1) complex and subsequent ubiquitination. Interacts with TRIM17. Interacts with BCL2L10/BCL-B (via BH1 domain). Interacts with SH3BGRL. Interacts with IRGM; enhancing BECN1-interacting partners and influencing the composition of the BECN1 complex. Interacts with ARMC3. Interacts with LRPPRC. (Microbial infection) Interacts with African swine fever virus (ASFV) apoptosis regulator Bcl-2 homolog; this interaction allows the virus to inhibit BECN1, and thus autophagy. Post-translationally, phosphorylation at Thr-117 by DAPK1 reduces its interaction with BCL2 and BCL2L1 and promotes induction of autophagy. In response to autophagic stimuli, phosphorylated at serine residues by AMPK in an ATG14-dependent manner, and this phosphorylation is critical for maximally efficient autophagy. Polyubiquitinated by NEDD4, both with 'Lys-11'- and 'Lys-63'-linkages. 'Lys-11'-linked polyubiquitination leads to degradation and is enhanced when the stabilizing interaction partner VPS34 is depleted. Deubiquitinated by USP10 and USP13, leading to stabilize the PIK3C3/VPS34-containing complexes. Polyubiquitinated at Lys-400 with 'Lys-48'-linkages. 'Lys-48'-linked polyubiquitination of Lys-400 leads to degradation. Deubiquitinated by ATXN3, leading to stabilization. Ubiquitinated at Lys-435 via 'Lys-63'-linkage by the DCX(AMBRA1) complex, thereby increasing the association between BECN1 and PIK3C3 to promote PIK3C3 activity. 'Lys-48'-linked ubiquitination by RNF216 leads to proteasomal degradation and autophagy inhibition. In terms of processing, proteolytically processed by caspases including CASP8 and CASP3; the C-terminal fragments lack autophagy-inducing capacity and are proposed to induce apoptosis. Thus the cleavage is proposed to be an determinant to switch from autophagy to apoptosis pathways affecting cellular homeostasis including viral infections and survival of tumor cells.

Its subcellular location is the cytoplasm. The protein localises to the golgi apparatus. It is found in the trans-Golgi network membrane. The protein resides in the endosome membrane. It localises to the endoplasmic reticulum membrane. Its subcellular location is the mitochondrion membrane. The protein localises to the cytoplasmic vesicle. It is found in the autophagosome. The protein resides in the mitochondrion. It localises to the nucleus. Its function is as follows. Plays a central role in autophagy. Acts as a core subunit of the PI3K complex that mediates formation of phosphatidylinositol 3-phosphate; different complex forms are believed to play a role in multiple membrane trafficking pathways: PI3KC3-C1 is involved in initiation of autophagosomes and PI3KC3-C2 in maturation of autophagosomes and endocytosis. Involved in regulation of degradative endocytic trafficking and required for the abscission step in cytokinesis, probably in the context of PI3KC3-C2. Essential for the formation of PI3KC3-C2 but not PI3KC3-C1 PI3K complex forms. Involved in endocytosis. May play a role in antiviral host defense. In terms of biological role, beclin-1-C 35 kDa localized to mitochondria can promote apoptosis; it induces the mitochondrial translocation of BAX and the release of proapoptotic factors. The protein is Beclin-1 (BECN1) of Sus scrofa (Pig).